We begin with the raw amino-acid sequence, 547 residues long: Elongator complex protein 3 (547 aa).

The Radical SAM core domain occupies 82–372 (RTASGIAVVA…YRVQRDIPMP (291 aa)). [4Fe-4S] cluster-binding residues include C99, C109, and C112. S161 carries the post-translational modification Phosphoserine. K164 provides a ligand contact to acetyl-CoA. Y202 carries the phosphotyrosine; by ALK modification. K229 carries the N6-methyllysine modification. Phosphotyrosine is present on Y251. Positions 396–547 (IQCRDVRTRE…QGPYMVKMLK (152 aa)) constitute an N-acetyltransferase domain. Acetyl-CoA-binding positions include 474–477 (ELHV), 497–499 (FGM), and Y530.

The protein belongs to the ELP3 family. Component of the elongator complex which consists of ELP1, ELP2, ELP3, ELP4, ELP5 and ELP6. ELP1, ELP2 and ELP3 form the elongator core complex. Interacts with alpha-tubulin. Requires [4Fe-4S] cluster as cofactor. In terms of processing, tyrosine-phosphorylated; phosphorylation on Tyr-202 does not affect elongator complex integrity or ELP3 protein stability. Also serine/threonine-phosphorylated. Expressed in the cerebellum and spinal motor neurons.

Its subcellular location is the cytoplasm. It is found in the nucleus. The catalysed reaction is uridine(34) in tRNA + acetyl-CoA + S-adenosyl-L-methionine + H2O = 5-(carboxymethyl)uridine(34) in tRNA + 5'-deoxyadenosine + L-methionine + CoA + 2 H(+). It functions in the pathway tRNA modification; 5-methoxycarbonylmethyl-2-thiouridine-tRNA biosynthesis. Its function is as follows. Catalytic tRNA acetyltransferase subunit of the elongator complex which is required for multiple tRNA modifications, including mcm5U (5-methoxycarbonylmethyl uridine), mcm5s2U (5-methoxycarbonylmethyl-2-thiouridine), and ncm5U (5-carbamoylmethyl uridine). In the elongator complex, acts as a tRNA uridine(34) acetyltransferase by mediating formation of carboxymethyluridine in the wobble base at position 34 in tRNAs. May also act as a protein lysine acetyltransferase by mediating acetylation of target proteins; such activity is however unclear in vivo and recent evidences suggest that ELP3 primarily acts as a tRNA acetyltransferase. Involved in neurogenesis: regulates the migration and branching of projection neurons in the developing cerebral cortex, through a process depending on alpha-tubulin acetylation. Required for acetylation of GJA1 in the developing cerebral cortex. The protein is Elongator complex protein 3 of Homo sapiens (Human).